The sequence spans 188 residues: Large ribosomal subunit protein eL18z (188 aa).

Belongs to the eukaryotic ribosomal protein eL18 family.

In Arabidopsis thaliana (Mouse-ear cress), this protein is Large ribosomal subunit protein eL18z (RPL18A).